We begin with the raw amino-acid sequence, 409 residues long: Arginine deiminase (409 aa).

Residue C399 is the Amidino-cysteine intermediate of the active site.

The protein belongs to the arginine deiminase family.

It is found in the cytoplasm. It catalyses the reaction L-arginine + H2O = L-citrulline + NH4(+). Its pathway is amino-acid degradation; L-arginine degradation via ADI pathway; carbamoyl phosphate from L-arginine: step 1/2. The sequence is that of Arginine deiminase (arcA) from Latilactobacillus sakei (Lactobacillus sakei).